The chain runs to 220 residues: Ribonuclease HII (220 aa).

An RNase H type-2 domain is found at 1–219 (MMIAGIDEAG…VENIREELKK (219 aa)). Asp7, Glu8, and Asp105 together coordinate a divalent metal cation.

This sequence belongs to the RNase HII family. It depends on Mn(2+) as a cofactor. Mg(2+) serves as cofactor.

It is found in the cytoplasm. It carries out the reaction Endonucleolytic cleavage to 5'-phosphomonoester.. Its function is as follows. Endonuclease that specifically degrades the RNA of RNA-DNA hybrids. This Methanosarcina mazei (strain ATCC BAA-159 / DSM 3647 / Goe1 / Go1 / JCM 11833 / OCM 88) (Methanosarcina frisia) protein is Ribonuclease HII.